The primary structure comprises 419 residues: Serine hydroxymethyltransferase (419 aa).

(6S)-5,6,7,8-tetrahydrofolate-binding positions include Leu120 and 124–126 (GHL). Lys229 carries the N6-(pyridoxal phosphate)lysine modification.

This sequence belongs to the SHMT family. As to quaternary structure, homodimer. It depends on pyridoxal 5'-phosphate as a cofactor.

Its subcellular location is the cytoplasm. It catalyses the reaction (6R)-5,10-methylene-5,6,7,8-tetrahydrofolate + glycine + H2O = (6S)-5,6,7,8-tetrahydrofolate + L-serine. It functions in the pathway one-carbon metabolism; tetrahydrofolate interconversion. The protein operates within amino-acid biosynthesis; glycine biosynthesis; glycine from L-serine: step 1/1. In terms of biological role, catalyzes the reversible interconversion of serine and glycine with tetrahydrofolate (THF) serving as the one-carbon carrier. This reaction serves as the major source of one-carbon groups required for the biosynthesis of purines, thymidylate, methionine, and other important biomolecules. Also exhibits THF-independent aldolase activity toward beta-hydroxyamino acids, producing glycine and aldehydes, via a retro-aldol mechanism. The polypeptide is Serine hydroxymethyltransferase (Herpetosiphon aurantiacus (strain ATCC 23779 / DSM 785 / 114-95)).